The sequence spans 758 residues: 5-methyltetrahydropteroyltriglutamate--homocysteine methyltransferase (758 aa).

Residues 17–20 (RELK) and K117 each bind 5-methyltetrahydropteroyltri-L-glutamate. Residues 434–436 (IGS) and E487 each bind L-homocysteine. L-methionine contacts are provided by residues 434–436 (IGS) and E487. 5-methyltetrahydropteroyltri-L-glutamate is bound by residues 518–519 (RC) and W564. D602 lines the L-homocysteine pocket. Residue D602 participates in L-methionine binding. Residue E608 coordinates 5-methyltetrahydropteroyltri-L-glutamate. Zn(2+)-binding residues include H644, C646, and E668. Residue H697 is the Proton donor of the active site. C729 provides a ligand contact to Zn(2+).

This sequence belongs to the vitamin-B12 independent methionine synthase family. Requires Zn(2+) as cofactor.

The enzyme catalyses 5-methyltetrahydropteroyltri-L-glutamate + L-homocysteine = tetrahydropteroyltri-L-glutamate + L-methionine. It participates in amino-acid biosynthesis; L-methionine biosynthesis via de novo pathway; L-methionine from L-homocysteine (MetE route): step 1/1. Functionally, catalyzes the transfer of a methyl group from 5-methyltetrahydrofolate to homocysteine resulting in methionine formation. In Yersinia pestis (strain Pestoides F), this protein is 5-methyltetrahydropteroyltriglutamate--homocysteine methyltransferase.